Reading from the N-terminus, the 44-residue chain is Iota-conotoxin-like R11.11 (44 aa).

Intrachain disulfides connect Cys5-Cys19, Cys12-Cys22, Cys18-Cys27, and Cys21-Cys36. A propeptide (removed by a carboxypeptidase) is located at residue Arg44.

It belongs to the conotoxin I1 superfamily. As to expression, expressed by the venom duct.

The protein resides in the secreted. Its function is as follows. Iota-conotoxins bind to voltage-gated sodium channels (Nav) and act as agonists by shifting the voltage-dependence of activation to more hyperpolarized levels. Produces general excitatory symptoms. In Conus radiatus (Rayed cone), this protein is Iota-conotoxin-like R11.11.